The sequence spans 194 residues: uncharacterized protein (194 aa).

Belongs to the calycin superfamily. Fatty-acid binding protein (FABP) family.

This is an uncharacterized protein from Caenorhabditis elegans.